The following is a 147-amino-acid chain: Transthyretin (147 aa).

The N-terminal stretch at 1–20 (MASHRLLLLCLAGLVFVSEA) is a signal peptide. A Sulfocysteine modification is found at C30. Residue K35 participates in L-thyroxine binding. 4-carboxyglutamate; in a patient with Moyamoya disease is present on E62. A Phosphoserine modification is found at S72. L-thyroxine is bound at residue E74. N118 carries N-linked (GlcNAc...) asparagine glycosylation. An L-thyroxine-binding site is contributed by S137.

This sequence belongs to the transthyretin family. Homotetramer. Dimer of dimers. In the homotetramer, subunits assemble around a central channel that can accommodate two ligand molecules. Interacts with RBP4. Post-translationally, not glycosylated under normal conditions. Following unfolding, caused for example by variant AMYLD1 'Gly-38', the cryptic Asn-118 site is exposed and glycosylated by STT3B-containing OST complex, leading to its degradation by the ER-associated degradation (ERAD) pathway. Sulfonation of the reactive cysteine Cys-30 enhances the stability of the native conformation of TTR, avoiding misassembly of the protein leading to amyloid formation. Detected in serum and cerebrospinal fluid (at protein level). Highly expressed in choroid plexus epithelial cells. Detected in retina pigment epithelium and liver.

Its subcellular location is the secreted. The protein resides in the cytoplasm. In terms of biological role, thyroid hormone-binding protein. Probably transports thyroxine from the bloodstream to the brain. The protein is Transthyretin (TTR) of Homo sapiens (Human).